A 178-amino-acid polypeptide reads, in one-letter code: ATP-dependent protease subunit HslV (178 aa).

Threonine 2 is an active-site residue. Na(+) is bound by residues glycine 157, cysteine 160, and threonine 163.

Belongs to the peptidase T1B family. HslV subfamily. As to quaternary structure, a double ring-shaped homohexamer of HslV is capped on each side by a ring-shaped HslU homohexamer. The assembly of the HslU/HslV complex is dependent on binding of ATP.

It localises to the cytoplasm. It catalyses the reaction ATP-dependent cleavage of peptide bonds with broad specificity.. Allosterically activated by HslU binding. Protease subunit of a proteasome-like degradation complex believed to be a general protein degrading machinery. This is ATP-dependent protease subunit HslV from Hamiltonella defensa subsp. Acyrthosiphon pisum (strain 5AT).